The sequence spans 513 residues: NAD(P)H-quinone oxidoreductase subunit 2, chloroplastic (513 aa).

14 consecutive transmembrane segments (helical) span residues 11-31, 38-58, 78-98, 112-132, 133-153, 167-187, 219-239, 256-276, 290-310, 318-338, 348-368, 389-409, 422-442, and 478-498; these read NLITILPECVLIICLLTILMI, SVWLSNIALLGLLTSTFILLF, GFTIAFRCLLTLSSALCIPLS, FLILLLTATLGGMFLCGANDL, VTIFVSLECLSLSSYLLAGQA, LLMGGASSSILVYGFSWLYGL, FGALGLWVAFVCILVGIGFKI, PTPVVAFLSVGSKAAGLALAT, WHIVLEIVAFLSMVFGNLIAA, MLAYSSISQAGYLLIAILVGN, YLLIYTFMNLGAFACTVIFGL, AFALSICLLSLAGMPPLAGFF, HLYLLVYTGLITSVISLYYYL, and LGLTLCVLASSILGFFMNPLI.

It belongs to the complex I subunit 2 family. As to quaternary structure, NDH is composed of at least 16 different subunits, 5 of which are encoded in the nucleus.

The protein localises to the plastid. The protein resides in the chloroplast thylakoid membrane. It catalyses the reaction a plastoquinone + NADH + (n+1) H(+)(in) = a plastoquinol + NAD(+) + n H(+)(out). The catalysed reaction is a plastoquinone + NADPH + (n+1) H(+)(in) = a plastoquinol + NADP(+) + n H(+)(out). Its function is as follows. NDH shuttles electrons from NAD(P)H:plastoquinone, via FMN and iron-sulfur (Fe-S) centers, to quinones in the photosynthetic chain and possibly in a chloroplast respiratory chain. The immediate electron acceptor for the enzyme in this species is believed to be plastoquinone. Couples the redox reaction to proton translocation, and thus conserves the redox energy in a proton gradient. This Staurastrum punctulatum (Green alga) protein is NAD(P)H-quinone oxidoreductase subunit 2, chloroplastic.